The primary structure comprises 250 residues: 5'-nucleotidase SurE (250 aa).

D8, D9, S40, and N92 together coordinate a divalent metal cation.

Belongs to the SurE nucleotidase family. A divalent metal cation serves as cofactor.

Its subcellular location is the cytoplasm. It carries out the reaction a ribonucleoside 5'-phosphate + H2O = a ribonucleoside + phosphate. Functionally, nucleotidase that shows phosphatase activity on nucleoside 5'-monophosphates. The sequence is that of 5'-nucleotidase SurE from Dichelobacter nodosus (strain VCS1703A).